Here is a 332-residue protein sequence, read N- to C-terminus: Melanocortin receptor 4 (332 aa).

Residues 1–43 are Extracellular-facing; sequence MVNSTHRGMHASLHLWNRSSHRLHSNASESLGKGYSDGGCYEQ. Asparagine 3, asparagine 17, and asparagine 26 each carry an N-linked (GlcNAc...) asparagine glycan. Cystine bridges form between cysteine 40–cysteine 279 and cysteine 271–cysteine 277. The chain crosses the membrane as a helical span at residues 44 to 69; it reads LFVSPEVFVTLGVISLLENILVIVAI. The Cytoplasmic segment spans residues 70-81; that stretch reads AKNKNLHSPMYF. A helical transmembrane segment spans residues 82-106; the sequence is FICSLAVADMLVSVSNGSETIVITL. Glutamate 100, aspartate 122, and aspartate 126 together coordinate Ca(2+). At 107–123 the chain is on the extracellular side; that stretch reads LNSTDTDTQSFTVNIDN. A helical membrane pass occupies residues 124–145; sequence VIDSVICSSLLASICSLLSIAV. At 146–165 the chain is on the cytoplasmic side; the sequence is DRYFTIFYALQYHNIMTVKR. A helical membrane pass occupies residues 166 to 186; it reads VRIIISCIWAACTVSGILFII. Over 187–191 the chain is Extracellular; sequence YSDSS. A helical transmembrane segment spans residues 192-215; that stretch reads AVIICLITMFFTMLALMASLYVHM. Topologically, residues 216 to 248 are cytoplasmic; it reads FLMARLHIKRIAVLPGTGAIRQGANMKGAITLT. The chain crosses the membrane as a helical span at residues 249-271; sequence ILIGVFVVCWAPFFLHLIFYISC. Topologically, residues 272 to 280 are extracellular; that stretch reads PQNPYCVCF. Residues 281–304 form a helical membrane-spanning segment; the sequence is MSHFNLYLILIMCNSVIDPLIYAL. Over 305 to 332 the chain is Cytoplasmic; sequence RSQELRKTFKEIICCYPLGGLCDLSSRY. Cysteine 318 carries S-palmitoyl cysteine lipidation.

The protein belongs to the G-protein coupled receptor 1 family. Homodimer; disulfide-linked, also forms higher order oligomers. Interacts with GNAS. Interacts with ATRNL1. Interacts with MGRN1; this interaction competes with GNAS-binding and thus inhibits agonist-induced cAMP production. Interacts with MRAP and MRAP2; these associated factors increase ligand-sensitivity and generation of cAMP.

It localises to the cell membrane. Its function is as follows. Hormone receptor that acts as a key component of the leptin-melanocortin pathway at the intersection of homeostatic maintenance of energetic state. Plays a role in regulating food intake: activation by a stimulating hormone such as anorexigenic alpha-melanocyte stimulating hormone (alpha-MSH) inhibits appetite, whereas binding to a natural antagonist like Agouti-related protein/AGRP promotes appetite. G-protein-coupled receptor that activates conventional Galphas signaling leading to induction of anorexogenic signaling in the hypothalamus to result in negative energy balance. Regulates the firing activity of neurons from the hypothalamus by alpha-MSH and AGRP independently of Galphas signaling by ligand-induced coupling of closure of inwardly rectifying potassium channel KCNJ13. In intestinal epithelial cells, plays a role in the inhibition of hepatic glucose production via nesfatin-1/NUCB2 leading to increased cyclic adenosine monophosphate (cAMP) levels and glucagon-like peptide 1 (GLP-1) secretion in the intestinal epithelium. This is Melanocortin receptor 4 (MC4R) from Macaca fascicularis (Crab-eating macaque).